The sequence spans 113 residues: U11-theraphotoxin-Hhn1a (113 aa).

The signal sequence occupies residues 1 to 21; that stretch reads MNTVRVTFLLVFVLAVSLGQA. Positions 22 to 74 are excised as a propeptide; the sequence is DKDENRMEMQEKTEQGNSYLDFAENLPLQKLEELEAKLLEEDSEESRNSRQKR. Over residues 60-69 the composition is skewed to basic and acidic residues; the sequence is LEEDSEESRN. The tract at residues 60–83 is disordered; it reads LEEDSEESRNSRQKRCIGEGVPCD. Disulfide bonds link Cys-75-Cys-90, Cys-82-Cys-95, and Cys-89-Cys-110.

It belongs to the neurotoxin 14 (magi-1) family. 01 (HNTX-16) subfamily. Expressed by the venom gland.

The protein resides in the secreted. Its function is as follows. Probable ion channel inhibitor. In Cyriopagopus hainanus (Chinese bird spider), this protein is U11-theraphotoxin-Hhn1a.